The following is a 165-amino-acid chain: MTRKQKRLAIIGGGMSFIVAAVLLVMFAFGQSIAYFYMPADLEKTPVNPGTRIRLGGLVAEGSIKRGEGRTVSFTVTDGEAKVPVSYTGILPDLFREGQGVVTEGMFDAATHGFVADSVLAKHDENYMPKEVADRLKDKGLWQQGAEGAAPAASAASGDKTGATK.

Residues 1–7 are Cytoplasmic-facing; that stretch reads MTRKQKR. Residues 8 to 28 traverse the membrane as a helical; Signal-anchor for type II membrane protein segment; that stretch reads LAIIGGGMSFIVAAVLLVMFA. Residues 29-165 lie on the Periplasmic side of the membrane; that stretch reads FGQSIAYFYM…ASGDKTGATK (137 aa). Heme-binding residues include histidine 123 and tyrosine 127. A disordered region spans residues 138-165; it reads DKGLWQQGAEGAAPAASAASGDKTGATK. Over residues 145-158 the composition is skewed to low complexity; sequence GAEGAAPAASAASG.

Belongs to the CcmE/CycJ family.

The protein localises to the cell inner membrane. Its function is as follows. Heme chaperone required for the biogenesis of c-type cytochromes. Transiently binds heme delivered by CcmC and transfers the heme to apo-cytochromes in a process facilitated by CcmF and CcmH. The chain is Cytochrome c-type biogenesis protein CcmE from Agrobacterium fabrum (strain C58 / ATCC 33970) (Agrobacterium tumefaciens (strain C58)).